We begin with the raw amino-acid sequence, 1224 residues long: DNA-directed RNA polymerase subunit beta'' (1224 aa).

Residues Cys233, Cys308, Cys315, and Cys318 each contribute to the Zn(2+) site.

This sequence belongs to the RNA polymerase beta' chain family. RpoC2 subfamily. In plastids the minimal PEP RNA polymerase catalytic core is composed of four subunits: alpha, beta, beta', and beta''. When a (nuclear-encoded) sigma factor is associated with the core the holoenzyme is formed, which can initiate transcription. Requires Zn(2+) as cofactor.

The protein localises to the plastid. It is found in the chloroplast. The enzyme catalyses RNA(n) + a ribonucleoside 5'-triphosphate = RNA(n+1) + diphosphate. Functionally, DNA-dependent RNA polymerase catalyzes the transcription of DNA into RNA using the four ribonucleoside triphosphates as substrates. This is DNA-directed RNA polymerase subunit beta'' from Pinus thunbergii (Japanese black pine).